Here is a 79-residue protein sequence, read N- to C-terminus: Exodeoxyribonuclease 7 small subunit (79 aa).

It belongs to the XseB family. As to quaternary structure, heterooligomer composed of large and small subunits.

Its subcellular location is the cytoplasm. The catalysed reaction is Exonucleolytic cleavage in either 5'- to 3'- or 3'- to 5'-direction to yield nucleoside 5'-phosphates.. In terms of biological role, bidirectionally degrades single-stranded DNA into large acid-insoluble oligonucleotides, which are then degraded further into small acid-soluble oligonucleotides. The chain is Exodeoxyribonuclease 7 small subunit from Shouchella clausii (strain KSM-K16) (Alkalihalobacillus clausii).